The chain runs to 444 residues: Homogentisate 1,2-dioxygenase (444 aa).

His-298 serves as the catalytic Proton acceptor. His-341 and Glu-347 together coordinate Fe cation. The homogentisate site is built by Tyr-356 and His-377. His-377 serves as a coordination point for Fe cation.

This sequence belongs to the homogentisate dioxygenase family. As to quaternary structure, hexamer; dimer of trimers. Fe cation serves as cofactor.

The catalysed reaction is homogentisate + O2 = 4-maleylacetoacetate + H(+). It participates in amino-acid degradation; L-phenylalanine degradation; acetoacetate and fumarate from L-phenylalanine: step 4/6. In terms of biological role, involved in the catabolism of homogentisate (2,5-dihydroxyphenylacetate or 2,5-OH-PhAc), a central intermediate in the degradation of phenylalanine and tyrosine. Catalyzes the oxidative ring cleavage of the aromatic ring of homogentisate to yield maleylacetoacetate. In Burkholderia orbicola (strain MC0-3), this protein is Homogentisate 1,2-dioxygenase.